Here is a 359-residue protein sequence, read N- to C-terminus: Membrane-bound lytic murein transglycosylase C (359 aa).

A signal peptide spans 1-16; the sequence is MKKYLALALIAPLLIS. Residue C17 is the site of N-palmitoyl cysteine attachment. Residue C17 is the site of S-diacylglycerol cysteine attachment.

It belongs to the transglycosylase Slt family.

It is found in the cell outer membrane. The enzyme catalyses Exolytic cleavage of the (1-&gt;4)-beta-glycosidic linkage between N-acetylmuramic acid (MurNAc) and N-acetylglucosamine (GlcNAc) residues in peptidoglycan, from either the reducing or the non-reducing ends of the peptidoglycan chains, with concomitant formation of a 1,6-anhydrobond in the MurNAc residue.. Murein-degrading enzyme. May play a role in recycling of muropeptides during cell elongation and/or cell division. In Escherichia coli O81 (strain ED1a), this protein is Membrane-bound lytic murein transglycosylase C.